The chain runs to 116 residues: Ribonuclease P protein component (116 aa).

The protein belongs to the RnpA family. As to quaternary structure, consists of a catalytic RNA component (M1 or rnpB) and a protein subunit.

It carries out the reaction Endonucleolytic cleavage of RNA, removing 5'-extranucleotides from tRNA precursor.. Functionally, RNaseP catalyzes the removal of the 5'-leader sequence from pre-tRNA to produce the mature 5'-terminus. It can also cleave other RNA substrates such as 4.5S RNA. The protein component plays an auxiliary but essential role in vivo by binding to the 5'-leader sequence and broadening the substrate specificity of the ribozyme. This Gluconacetobacter diazotrophicus (strain ATCC 49037 / DSM 5601 / CCUG 37298 / CIP 103539 / LMG 7603 / PAl5) protein is Ribonuclease P protein component.